Reading from the N-terminus, the 150-residue chain is Arginine repressor (150 aa).

It belongs to the ArgR family.

The protein localises to the cytoplasm. Its pathway is amino-acid biosynthesis; L-arginine biosynthesis [regulation]. Its function is as follows. Regulates arginine biosynthesis genes. This is Arginine repressor from Clostridium botulinum (strain Alaska E43 / Type E3).